The chain runs to 206 residues: Thymidylate kinase (206 aa).

Residue 10-17 participates in ATP binding; the sequence is GNDGSGKS.

The protein belongs to the thymidylate kinase family.

The enzyme catalyses dTMP + ATP = dTDP + ADP. In terms of biological role, phosphorylation of dTMP to form dTDP in both de novo and salvage pathways of dTTP synthesis. The chain is Thymidylate kinase from Caldicellulosiruptor saccharolyticus (strain ATCC 43494 / DSM 8903 / Tp8T 6331).